A 940-amino-acid chain; its full sequence is MDKIEVRGARTHNLKNINLTIPRDKLIVITGLSGSGKSSLAFDTLYAEGQRRYVESLSAYARQFLSLMEKPDVDHIEGLSPAISIEQKSTSHNPRSTVGTITEVYDYLRLLYARVGEPRCPEHQVPLKAQTISQMVDKVLELPEGSKMMLLATIVKERKGEHVKTLENLAAQGFIRARIDGETCDLTDPPKLELHKKHTIEVIVDRFKVRSDLQQRLAESFETALELSGGIVVVAPMEGDGEEQIFSANFACPHCGYSMRELEPRLFSFNNPAGACPTCDGLGVQQYFDPDRVIQDANLSLAQGAIRGWDQKNFYYFQMLTALAEHYDFDVHTPFNKLSKKIQEIILHGSGRTEIEFKYINDRGDIRLKKHPFEGILHNLERRYRDTESNSVREELAKYISNKPCSSCDGTRLKIEARNVFINDTALPTIVELSIADALTFFQELKLEGQRAQIAEKVMKEINDRLQFLVNVGLNYLNLSRSAETLSGGEAQRIRLASQIGAGLVGVMYVLDEPSIGLHQRDNERLLQTLTHLRNLGNTVLVVEHDEDAIRMADHVIDIGPGAGVHGGMVVAEGNVEEIIANPNSLTGQYLSGVKKIAVPEQRTPKDAKKTVELKGAVGNNLKNVDLSIPVGLFTCVTGVSGSGKSTLINDTFFKIAHTALNGATTATPAPYRSIQGLEHFDKVIDIDQSPIGRTPRSNPATYTGIFTPIRELFAGTQESRSRGYQPGRFSFNVRGGRCEACQGDGVIKVEMHFLPDVYVPCDVCKGKRYNRETLEVRYKGKTIDEVLDMTVEDAREFFDPVPVIARKLQTLMDVGLSYIRLGQSATTLSGGEAQRVKLARELSKRDTGKTLYILDEPTTGLHFHDIQQLLSVLHRLRDHGNTVVVIEHNLDVIKTADWIIDLGPEGGQGGGLIIAEGTPEDVAQIEASHTARFLKPLLN.

31–38 (GLSGSGKS) provides a ligand contact to ATP. The C4-type zinc finger occupies 252–279 (CPHCGYSMRELEPRLFSFNNPAGACPTC). ABC transporter domains lie at 309–586 (WDQK…PNSL) and 606–936 (KDAK…RFLK). 639–646 (GVSGSGKS) lines the ATP pocket. A C4-type zinc finger spans residues 739–765 (CEACQGDGVIKVEMHFLPDVYVPCDVC).

This sequence belongs to the ABC transporter superfamily. UvrA family. In terms of assembly, forms a heterotetramer with UvrB during the search for lesions.

The protein localises to the cytoplasm. In terms of biological role, the UvrABC repair system catalyzes the recognition and processing of DNA lesions. UvrA is an ATPase and a DNA-binding protein. A damage recognition complex composed of 2 UvrA and 2 UvrB subunits scans DNA for abnormalities. When the presence of a lesion has been verified by UvrB, the UvrA molecules dissociate. This Vibrio cholerae serotype O1 (strain ATCC 39315 / El Tor Inaba N16961) protein is UvrABC system protein A.